The following is a 518-amino-acid chain: Cytochrome P450 monooxygenase atnE (518 aa).

Residues 11–31 traverse the membrane as a helical segment; sequence FLAAFAVWMGVVVLAFAIFCV. N-linked (GlcNAc...) asparagine glycosylation occurs at N184. Position 458 (C458) interacts with heme.

Belongs to the cytochrome P450 family. It depends on heme as a cofactor.

The protein localises to the membrane. It functions in the pathway secondary metabolite biosynthesis. Functionally, cytochrome P450 monooxygenase; part of the gene cluster that mediates the biosynthesis of aspercryptins, linear lipopeptides built from six amino acids including 2 highly unusual and nonproteogenic amino acids, 2-amino-octanoic acid (2aoa) and 2-amino-dodecanol (2adol). The core structure of aspercryptins is as follows: Ser/Ala-Thr-Ile/Val-2aoa-Asn-2adol. The first step of aspercryptin biosynthesis is the generation of the fatty acid precursors, octanoic and dodecanoic acids, by the FAS subunits atnF and atnM. The fatty acid precursors are likely transformed into the corresponding alpha-amino fatty acids in three steps. First, they are hydroxylated by the cytochrome P450 monooxygenase atnE, then oxidized to the corresponding alpha-keto acids by the NAD(P)-dependent oxidoreductase atnD, and finally converted to the alpha-amino fatty acids by the PLP-dependent aminotransferases atnH or atnJ. the alpha-amino fatty acids, 2-amino-octanoic and 2-amino-dodecanoic acids, are recognized, activated, and covalently tethered to the NRPS atnA by its fourth and sixth adenylation domains. The second module of atnA is the Thr module and contains an epimerase (E) domain responsible for the epimerization of Thr to D-allo-Thr. Additionally, despite atnA having only one epimerase domain, the first amino acid of aspercryptin A1 is D-Ser, suggesting that serine is either loaded directly as D-Ser on the first module or that the epimerase domain in the threonine module epimerizes both L-Ser and L-Thr. After condensation of the hexapeptide of aspercryptin, the C-terminal reductase (TE) domain might be involved in the reductive release and production of the aldehyde hexapeptide. Further reduction would generate aspercryptins. The variety of aspercryptins produced reflects the flexibility of the atnA NRPS, allowing incorporation of alanine instead of serine, valine for isoleucine, and a C10 fatty amino alcohol instead of the C12 version. AtnB seems to be involved in the selectivity for Ile versus Val by the third module. Moreover, type B, C and D aspercryptins have an additional N-terminal cichorine, acetyl and propionyl group respectively. In Emericella nidulans (strain FGSC A4 / ATCC 38163 / CBS 112.46 / NRRL 194 / M139) (Aspergillus nidulans), this protein is Cytochrome P450 monooxygenase atnE.